Here is a 131-residue protein sequence, read N- to C-terminus: Large ribosomal subunit protein eL32 (131 aa).

This sequence belongs to the eukaryotic ribosomal protein eL32 family.

The chain is Large ribosomal subunit protein eL32 (rpl32e) from Sulfurisphaera tokodaii (strain DSM 16993 / JCM 10545 / NBRC 100140 / 7) (Sulfolobus tokodaii).